A 1713-amino-acid polypeptide reads, in one-letter code: Serine/threonine-protein kinase MRCK beta (1713 aa).

Positions 76–342 constitute a Protein kinase domain; the sequence is FEIIKVIGRG…IEDFKKHAFF (267 aa). Residues 82 to 90 and Lys-105 each bind ATP; that span reads IGRGAFGEV. Catalysis depends on Asp-200, which acts as the Proton acceptor. Residues Ser-221 and Ser-233 each carry the phosphoserine; by autocatalysis modification. Thr-239 carries the post-translational modification Phosphothreonine; by autocatalysis. The AGC-kinase C-terminal domain occupies 343-413; it reads EGLNWENIRN…TTESCFSDRG (71 aa). At Thr-423 the chain carries Phosphothreonine. Residues 434–649 adopt a coiled-coil conformation; sequence LENSLQIEAY…ASKERKLREH (216 aa). Position 671 is an omega-N-methylarginine (Arg-671). Coiled coils occupy residues 681 to 815 and 878 to 939; these read QEIS…AHWE and ELQS…FRAD. The residue at position 927 (Ser-927) is a Phosphoserine. Position 954 is a phosphotyrosine (Tyr-954). Positions 971-994 are enriched in polar residues; that stretch reads ASDQETQASKMDLSPSVSVATSTE. The segment at 971-1022 is disordered; that stretch reads ASDQETQASKMDLSPSVSVATSTEQQEDMARPQQRPSPVPLPSTQALAMAGP. The segment at 1026–1076 adopts a Phorbol-ester/DAG-type zinc-finger fold; the sequence is AHQFSIKSFPSPTQCSHCTSLMVGLIRQGYACEVCAFSCHVSCKDSAPQVC. Residues 1096-1215 form the PH domain; the sequence is GTAYKGYVKV…WVGILEGLQA (120 aa). In terms of domain architecture, CNH spans 1241-1515; the sequence is IKAVLAAAIV…RPLNSDGSLN (275 aa). Residues 1585–1598 enclose the CRIB domain; the sequence is ISNPTNFNHVAHMG. The disordered stretch occupies residues 1616–1713; that stretch reads TVQEEKQGPT…EGLDQPSCDA (98 aa). Basic and acidic residues predominate over residues 1666–1677; that stretch reads DFDKEPDSDSTK. Residues Ser-1682, Ser-1684, Ser-1688, Ser-1692, and Ser-1695 each carry the phosphoserine modification.

Belongs to the protein kinase superfamily. AGC Ser/Thr protein kinase family. DMPK subfamily. Homodimer and homotetramer via the coiled coil regions. Interacts tightly with GTP-bound but not GDP-bound CDC42. Interacts with TJP1; this interaction requires the presence of catalytically active CDC42. Forms a tripartite complex with MYO18A and LURAP1 with the latter acting as an adapter connecting CDC42BPB and MYO18A. LURAP1 binding results in activation of CDC42BPB by abolition of its negative autoregulation. Interacts with STRIP1, STRN3 and SIKE1. Interacts with CPNE4 (via VWFA domain). Interacts with LURAP1. Interacts (via AGC-kinase C-terminal domain) with FAM89B/LRAP25 (via LRR repeat). Forms a tripartite complex with FAM89B/LRAP25 and LIMK1. Mg(2+) is required as a cofactor. Proteolytically cleaved by caspases upon apoptosis induction.

The protein localises to the cytoplasm. Its subcellular location is the cell membrane. The protein resides in the cell junction. It localises to the cell projection. It is found in the lamellipodium. The catalysed reaction is L-seryl-[protein] + ATP = O-phospho-L-seryl-[protein] + ADP + H(+). It carries out the reaction L-threonyl-[protein] + ATP = O-phospho-L-threonyl-[protein] + ADP + H(+). With respect to regulation, maintained in an inactive, closed conformation by an interaction between the kinase domain and the negative autoregulatory C-terminal coiled-coil region. Agonist binding to the phorbol ester binding site disrupts this, releasing the kinase domain to allow N-terminus-mediated dimerization and kinase activation by transautophosphorylation. Inhibited by chelerythrine chloride. Its function is as follows. Serine/threonine-protein kinase which is an important downstream effector of CDC42 and plays a role in the regulation of cytoskeleton reorganization and cell migration. Regulates actin cytoskeletal reorganization via phosphorylation of PPP1R12C and MYL9/MLC2. In concert with MYO18A and LURAP1, is involved in modulating lamellar actomyosin retrograde flow that is crucial to cell protrusion and migration. Phosphorylates PPP1R12A. In concert with FAM89B/LRAP25 mediates the targeting of LIMK1 to the lamellipodium resulting in its activation and subsequent phosphorylation of CFL1 which is important for lamellipodial F-actin regulation. This is Serine/threonine-protein kinase MRCK beta from Mus musculus (Mouse).